Reading from the N-terminus, the 117-residue chain is Large ribosomal subunit protein bL19 (117 aa).

It belongs to the bacterial ribosomal protein bL19 family.

This protein is located at the 30S-50S ribosomal subunit interface and may play a role in the structure and function of the aminoacyl-tRNA binding site. The protein is Large ribosomal subunit protein bL19 of Thioalkalivibrio sulfidiphilus (strain HL-EbGR7).